The sequence spans 391 residues: Coiled-coil domain-containing protein 85C-A (391 aa).

Coiled-coil stretches lie at residues 23–87 (KCSK…ELCC) and 121–146 (FQQK…KEII). Positions 154–212 (NGAGSRSSIDSQSSLSNLNGGSATVRDVGDGSSTSSTGSAGSPDHHHSHIHKPTEGKIT) are disordered. 2 stretches are compositionally biased toward low complexity: residues 158–175 (SRSS…NGGS) and 183–195 (DGSS…SAGS).

Belongs to the CCDC85 family.

It is found in the cell junction. It localises to the tight junction. Its subcellular location is the adherens junction. May play a role in cell-cell adhesion and epithelium development through its interaction with proteins of the beta-catenin family. May play an important role in cortical development, especially in the maintenance of radial glia. The sequence is that of Coiled-coil domain-containing protein 85C-A (ccdc85ca) from Danio rerio (Zebrafish).